A 582-amino-acid chain; its full sequence is ATP-dependent lipid A-core flippase (582 aa).

A run of 5 helical transmembrane segments spans residues 16–36 (LWPMISPFKAGLAVAAIALII), 63–83 (VLLWMPLVVIGLMLVRGASGF), 153–173 (IIGLFILMFYYSWQLSIILIV), 253–273 (PIIQLIASLALAFVLYAASFP), and 275–295 (VMETLTAGTITVVFSSMIALM). In terms of domain architecture, ABC transmembrane type-1 spans 28–310 (AVAAIALIIN…LTNVNAQFQR (283 aa)). The region spanning 342–578 (LEFRQVNFAY…NGAYAQLHRM (237 aa)) is the ABC transporter domain. 376 to 383 (GRSGSGKS) provides a ligand contact to ATP.

This sequence belongs to the ABC transporter superfamily. Lipid exporter (TC 3.A.1.106) family. As to quaternary structure, homodimer.

Its subcellular location is the cell inner membrane. The enzyme catalyses ATP + H2O + lipid A-core oligosaccharideSide 1 = ADP + phosphate + lipid A-core oligosaccharideSide 2.. In terms of biological role, involved in lipopolysaccharide (LPS) biosynthesis. Translocates lipid A-core from the inner to the outer leaflet of the inner membrane. Transmembrane domains (TMD) form a pore in the inner membrane and the ATP-binding domain (NBD) is responsible for energy generation. The sequence is that of ATP-dependent lipid A-core flippase from Pectobacterium atrosepticum (strain SCRI 1043 / ATCC BAA-672) (Erwinia carotovora subsp. atroseptica).